Reading from the N-terminus, the 159-residue chain is Vesicle transport protein SFT2B (159 aa).

The residue at position 1 (Met1) is an N-acetylmethionine. The Cytoplasmic portion of the chain corresponds to 1-36 (MDKLKKVLSGQDTEDRSGLSEVVEASSLSWGTRIKG). A Phosphoserine modification is found at Ser9. Residues 37-57 (FIACFALGILCSVLGTLLLWV) form a helical membrane-spanning segment. The Lumenal portion of the chain corresponds to 58–63 (PRKGLG). The helical transmembrane segment at 64–84 (LFAVFYTLGNIMSIGSTVFLM) threads the bilayer. Over 85-98 (GPLKQLKRMFEPTR) the chain is Cytoplasmic. A helical transmembrane segment spans residues 99-119 (LIATILVLLCFALTLCSAFLW). Over 120-122 (NKG) the chain is Lumenal. The helical transmembrane segment at 123–143 (LALIFCILQSLALTWYSLSYI) threads the bilayer. Residues 144–159 (PYARDAVKKCFAVCLA) lie on the Cytoplasmic side of the membrane.

This sequence belongs to the SFT2 family.

It is found in the membrane. In terms of biological role, may be involved in fusion of retrograde transport vesicles derived from an endocytic compartment with the Golgi complex. This chain is Vesicle transport protein SFT2B, found in Mus musculus (Mouse).